We begin with the raw amino-acid sequence, 152 residues long: Superoxide dismutase [Cu-Zn] (152 aa).

Cu cation-binding residues include His45, His47, and His62. The interval Pro61–Thr87 is disordered. Positions 62, 70, 79, and 82 each coordinate Zn(2+). Over residues Gly67–Gly81 the composition is skewed to basic and acidic residues. His119 serves as a coordination point for Cu cation.

The protein belongs to the Cu-Zn superoxide dismutase family. As to quaternary structure, homodimer. Cu cation is required as a cofactor. The cofactor is Zn(2+).

Its subcellular location is the cytoplasm. It carries out the reaction 2 superoxide + 2 H(+) = H2O2 + O2. Its function is as follows. Destroys radicals which are normally produced within the cells and which are toxic to biological systems. This chain is Superoxide dismutase [Cu-Zn], found in Zingiber officinale (Ginger).